The following is a 351-amino-acid chain: S-adenosylmethionine:tRNA ribosyltransferase-isomerase (351 aa).

It belongs to the QueA family. Monomer.

It localises to the cytoplasm. It catalyses the reaction 7-aminomethyl-7-carbaguanosine(34) in tRNA + S-adenosyl-L-methionine = epoxyqueuosine(34) in tRNA + adenine + L-methionine + 2 H(+). It participates in tRNA modification; tRNA-queuosine biosynthesis. Transfers and isomerizes the ribose moiety from AdoMet to the 7-aminomethyl group of 7-deazaguanine (preQ1-tRNA) to give epoxyqueuosine (oQ-tRNA). The protein is S-adenosylmethionine:tRNA ribosyltransferase-isomerase of Sphingopyxis alaskensis (strain DSM 13593 / LMG 18877 / RB2256) (Sphingomonas alaskensis).